A 145-amino-acid chain; its full sequence is D-aminoacyl-tRNA deacylase (145 aa).

A Gly-cisPro motif, important for rejection of L-amino acids motif is present at residues 137–138 (GP).

This sequence belongs to the DTD family. In terms of assembly, homodimer.

The protein resides in the cytoplasm. It carries out the reaction glycyl-tRNA(Ala) + H2O = tRNA(Ala) + glycine + H(+). The catalysed reaction is a D-aminoacyl-tRNA + H2O = a tRNA + a D-alpha-amino acid + H(+). An aminoacyl-tRNA editing enzyme that deacylates mischarged D-aminoacyl-tRNAs. Also deacylates mischarged glycyl-tRNA(Ala), protecting cells against glycine mischarging by AlaRS. Acts via tRNA-based rather than protein-based catalysis; rejects L-amino acids rather than detecting D-amino acids in the active site. By recycling D-aminoacyl-tRNA to D-amino acids and free tRNA molecules, this enzyme counteracts the toxicity associated with the formation of D-aminoacyl-tRNA entities in vivo and helps enforce protein L-homochirality. The protein is D-aminoacyl-tRNA deacylase of Lactobacillus delbrueckii subsp. bulgaricus (strain ATCC 11842 / DSM 20081 / BCRC 10696 / JCM 1002 / NBRC 13953 / NCIMB 11778 / NCTC 12712 / WDCM 00102 / Lb 14).